Here is a 430-residue protein sequence, read N- to C-terminus: UDP-N-acetylmuramoylalanine--D-glutamate ligase (430 aa).

109–115 (GTDGKST) lines the ATP pocket.

It belongs to the MurCDEF family.

The protein resides in the cytoplasm. It carries out the reaction UDP-N-acetyl-alpha-D-muramoyl-L-alanine + D-glutamate + ATP = UDP-N-acetyl-alpha-D-muramoyl-L-alanyl-D-glutamate + ADP + phosphate + H(+). It functions in the pathway cell wall biogenesis; peptidoglycan biosynthesis. In terms of biological role, cell wall formation. Catalyzes the addition of glutamate to the nucleotide precursor UDP-N-acetylmuramoyl-L-alanine (UMA). The polypeptide is UDP-N-acetylmuramoylalanine--D-glutamate ligase (Thermotoga maritima (strain ATCC 43589 / DSM 3109 / JCM 10099 / NBRC 100826 / MSB8)).